Here is a 348-residue protein sequence, read N- to C-terminus: Phospho-2-dehydro-3-deoxyheptonate aldolase, Trp-sensitive (348 aa).

This sequence belongs to the class-I DAHP synthase family.

It carries out the reaction D-erythrose 4-phosphate + phosphoenolpyruvate + H2O = 7-phospho-2-dehydro-3-deoxy-D-arabino-heptonate + phosphate. The protein operates within metabolic intermediate biosynthesis; chorismate biosynthesis; chorismate from D-erythrose 4-phosphate and phosphoenolpyruvate: step 1/7. Stereospecific condensation of phosphoenolpyruvate (PEP) and D-erythrose-4-phosphate (E4P) giving rise to 3-deoxy-D-arabino-heptulosonate-7-phosphate (DAHP). This chain is Phospho-2-dehydro-3-deoxyheptonate aldolase, Trp-sensitive (aroH), found in Enterobacter agglomerans (Erwinia herbicola).